A 227-amino-acid chain; its full sequence is Enolase-phosphatase E1 (227 aa).

It belongs to the HAD-like hydrolase superfamily. MasA/MtnC family. As to quaternary structure, monomer. The cofactor is Mg(2+).

The catalysed reaction is 5-methylsulfanyl-2,3-dioxopentyl phosphate + H2O = 1,2-dihydroxy-5-(methylsulfanyl)pent-1-en-3-one + phosphate. Its pathway is amino-acid biosynthesis; L-methionine biosynthesis via salvage pathway; L-methionine from S-methyl-5-thio-alpha-D-ribose 1-phosphate: step 3/6. The protein operates within amino-acid biosynthesis; L-methionine biosynthesis via salvage pathway; L-methionine from S-methyl-5-thio-alpha-D-ribose 1-phosphate: step 4/6. Its function is as follows. Bifunctional enzyme that catalyzes the enolization of 2,3-diketo-5-methylthiopentyl-1-phosphate (DK-MTP-1-P) into the intermediate 2-hydroxy-3-keto-5-methylthiopentenyl-1-phosphate (HK-MTPenyl-1-P), which is then dephosphorylated to form the acireductone 1,2-dihydroxy-3-keto-5-methylthiopentene (DHK-MTPene). This Pseudomonas syringae pv. syringae (strain B728a) protein is Enolase-phosphatase E1.